The primary structure comprises 70 residues: DNA-directed RNA polymerase subunit omega (70 aa).

This sequence belongs to the RNA polymerase subunit omega family. The RNAP catalytic core consists of 2 alpha, 1 beta, 1 beta' and 1 omega subunit. When a sigma factor is associated with the core the holoenzyme is formed, which can initiate transcription.

It carries out the reaction RNA(n) + a ribonucleoside 5'-triphosphate = RNA(n+1) + diphosphate. Its function is as follows. Promotes RNA polymerase assembly. Latches the N- and C-terminal regions of the beta' subunit thereby facilitating its interaction with the beta and alpha subunits. The sequence is that of DNA-directed RNA polymerase subunit omega from Bacillus cereus (strain G9842).